A 123-amino-acid chain; its full sequence is Ragulator complex protein LAMTOR3-A (123 aa).

It belongs to the LAMTOR3 family. In terms of assembly, part of the Ragulator complex composed of lamtor1, lamtor2, lamtor3, lamtor4 and lamtor5. The Ragulator complex interacts with slc38a9; the probable amino acid sensor. Component of the lysosomal folliculin complex (LFC).

The protein localises to the late endosome membrane. Its function is as follows. As part of the Ragulator complex it is involved in amino acid sensing and activation of mTORC1, a signaling complex promoting cell growth in response to growth factors, energy levels, and amino acids. Activated by amino acids through a mechanism involving the lysosomal V-ATPase, the Ragulator plays a dual role for the small GTPases Rag (RagA/RRAGA, RagB/RRAGB, RagC/RRAGC and/or RagD/RRAGD): it (1) acts as a guanine nucleotide exchange factor (GEF), activating the small GTPases Rag and (2) mediates recruitment of Rag GTPases to the lysosome membrane. Activated Ragulator and Rag GTPases function as a scaffold recruiting mTORC1 to lysosomes where it is in turn activated. The protein is Ragulator complex protein LAMTOR3-A (lamtor3-a) of Xenopus laevis (African clawed frog).